The following is a 368-amino-acid chain: Isopentenyl-diphosphate delta-isomerase (368 aa).

7–8 (RK) is a substrate binding site. FMN is bound by residues threonine 65, 66–68 (GMT), serine 96, and asparagine 125. Position 96-98 (96-98 (SQR)) interacts with substrate. Substrate is bound at residue glutamine 160. Glutamate 161 is a binding site for Mg(2+). FMN contacts are provided by residues lysine 193, serine 218, threonine 223, 275-277 (GIR), and 296-297 (AL).

It belongs to the IPP isomerase type 2 family. In terms of assembly, homooctamer. Dimer of tetramers. Requires FMN as cofactor. It depends on NADPH as a cofactor. Mg(2+) is required as a cofactor.

The protein localises to the cytoplasm. It carries out the reaction isopentenyl diphosphate = dimethylallyl diphosphate. Functionally, involved in the biosynthesis of isoprenoids. Catalyzes the 1,3-allylic rearrangement of the homoallylic substrate isopentenyl (IPP) to its allylic isomer, dimethylallyl diphosphate (DMAPP). The sequence is that of Isopentenyl-diphosphate delta-isomerase from Saccharolobus shibatae (strain ATCC 51178 / DSM 5389 / JCM 8931 / NBRC 15437 / B12) (Sulfolobus shibatae).